The chain runs to 347 residues: Putative histone PARylation factor 1-like (347 aa).

Residue methionine 1 is modified to N-acetylmethionine. An N6-acetyllysine mark is found at lysine 187 and lysine 234.

This sequence belongs to the HPF1 family.

The polypeptide is Putative histone PARylation factor 1-like (Homo sapiens (Human)).